The following is a 42-amino-acid chain: Photosystem I reaction center subunit IX (42 aa).

A helical transmembrane segment spans residues 7–27; it reads YLSTAPVLATIWFIILAGLLI.

This sequence belongs to the PsaJ family.

It is found in the plastid. Its subcellular location is the chloroplast thylakoid membrane. Functionally, may help in the organization of the PsaE and PsaF subunits. This Mesostigma viride (Green alga) protein is Photosystem I reaction center subunit IX.